The primary structure comprises 449 residues: 23S rRNA (uracil(1939)-C(5))-methyltransferase RlmD (449 aa).

Positions 1 to 66 (MGRSRHHNKL…AKFDEAKVVE (66 aa)) constitute a TRAM domain. Residues C79, C85, C88, and C169 each contribute to the [4Fe-4S] cluster site. The S-adenosyl-L-methionine site is built by Q280, F309, N314, E330, N357, and D379. C405 serves as the catalytic Nucleophile.

This sequence belongs to the class I-like SAM-binding methyltransferase superfamily. RNA M5U methyltransferase family. RlmD subfamily.

It catalyses the reaction uridine(1939) in 23S rRNA + S-adenosyl-L-methionine = 5-methyluridine(1939) in 23S rRNA + S-adenosyl-L-homocysteine + H(+). Catalyzes the formation of 5-methyl-uridine at position 1939 (m5U1939) in 23S rRNA. The protein is 23S rRNA (uracil(1939)-C(5))-methyltransferase RlmD of Francisella tularensis subsp. novicida (strain U112).